The sequence spans 152 residues: Deoxyuridine 5'-triphosphate nucleotidohydrolase (152 aa).

Substrate contacts are provided by residues 71–73, Asn84, 88–90, and Met98; these read RSG and LID.

The protein belongs to the dUTPase family. Mg(2+) serves as cofactor.

It catalyses the reaction dUTP + H2O = dUMP + diphosphate + H(+). It participates in pyrimidine metabolism; dUMP biosynthesis; dUMP from dCTP (dUTP route): step 2/2. In terms of biological role, this enzyme is involved in nucleotide metabolism: it produces dUMP, the immediate precursor of thymidine nucleotides and it decreases the intracellular concentration of dUTP so that uracil cannot be incorporated into DNA. The chain is Deoxyuridine 5'-triphosphate nucleotidohydrolase from Cronobacter sakazakii (strain ATCC BAA-894) (Enterobacter sakazakii).